The sequence spans 397 residues: S-adenosylmethionine synthase (397 aa).

An ATP-binding site is contributed by His-15. Asp-17 serves as a coordination point for Mg(2+). Glu-43 lines the K(+) pocket. 2 residues coordinate L-methionine: Glu-56 and Gln-99. Positions 99–109 (QSPDIAQGVTA) are flexible loop. Residues 173–175 (DGK), 242–243 (KF), Asp-251, 257–258 (RK), Ala-274, and Lys-278 each bind ATP. Asp-251 serves as a coordination point for L-methionine. Lys-282 provides a ligand contact to L-methionine.

It belongs to the AdoMet synthase family. In terms of assembly, homotetramer; dimer of dimers. The cofactor is Mg(2+). Requires K(+) as cofactor.

Its subcellular location is the cytoplasm. It carries out the reaction L-methionine + ATP + H2O = S-adenosyl-L-methionine + phosphate + diphosphate. The protein operates within amino-acid biosynthesis; S-adenosyl-L-methionine biosynthesis; S-adenosyl-L-methionine from L-methionine: step 1/1. In terms of biological role, catalyzes the formation of S-adenosylmethionine (AdoMet) from methionine and ATP. The overall synthetic reaction is composed of two sequential steps, AdoMet formation and the subsequent tripolyphosphate hydrolysis which occurs prior to release of AdoMet from the enzyme. The polypeptide is S-adenosylmethionine synthase (Cutibacterium acnes (strain DSM 16379 / KPA171202) (Propionibacterium acnes)).